Consider the following 348-residue polypeptide: Sulfate/thiosulfate import ATP-binding protein CysA (348 aa).

In terms of domain architecture, ABC transporter spans 3–237 (IRIQELRKQF…PSSPFVYSFV (235 aa)). 35–42 (GPSGSGKT) is a binding site for ATP.

Belongs to the ABC transporter superfamily. Sulfate/tungstate importer (TC 3.A.1.6) family. As to quaternary structure, the complex is composed of two ATP-binding proteins (CysA), two transmembrane proteins (CysT and CysW) and a solute-binding protein (CysP).

It is found in the cell inner membrane. The catalysed reaction is sulfate(out) + ATP + H2O = sulfate(in) + ADP + phosphate + H(+). The enzyme catalyses thiosulfate(out) + ATP + H2O = thiosulfate(in) + ADP + phosphate + H(+). Part of the ABC transporter complex CysAWTP involved in sulfate/thiosulfate import. Responsible for energy coupling to the transport system. The sequence is that of Sulfate/thiosulfate import ATP-binding protein CysA from Xylella fastidiosa (strain Temecula1 / ATCC 700964).